A 125-amino-acid polypeptide reads, in one-letter code: Small ribosomal subunit protein bS6 (125 aa).

It belongs to the bacterial ribosomal protein bS6 family.

Its function is as follows. Binds together with bS18 to 16S ribosomal RNA. This is Small ribosomal subunit protein bS6 from Baumannia cicadellinicola subsp. Homalodisca coagulata.